Here is a 317-residue protein sequence, read N- to C-terminus: MSATEEENVLVFDTTMKKKKKSKDSAAQTEEEKKKLKSKTLAMMSQQEDEQEQEDEKKEKRKKKKAALLASTEGENSEAIEKLENEGAHDEDIEAEFMGEKKKKKKSSKSSTTTTTSTTTTTTEPTETEPTEDGESKEKTITTSDGDTFVQGTIPWAGTDRDYKYSELTYRIYHLLQANNPDLISDQKRTMKPPQVMREGTKKTIWANFAEICGTLNRKVEHVYNYVFAELGTNGSIDGNQRLVIRGRFKTSQIEIVIRHYISEYVACRNCKSPNTVLERNNRLYFLCCNACNSKRSVAVIKKGLEGAGKKAPKEQS.

The interval 1-146 (MSATEEENVL…KEKTITTSDG (146 aa)) is disordered. Positions 79 to 90 (AIEKLENEGAHD) are enriched in basic and acidic residues. Residues 109 to 125 (KSSTTTTTSTTTTTTEP) show a composition bias toward low complexity. The segment at 222-246 (HVYNYVFAELGTNGSIDGNQRLVIR) adopts a C4-type zinc-finger fold.

Belongs to the eIF-2-beta/eIF-5 family. In terms of assembly, eukaryotic translation initiation factor 2 eIF2 is a heterotrimeric complex composed of an alpha, a beta and a gamma subunit.

The protein localises to the cytoplasm. Its subcellular location is the cytosol. In terms of biological role, component of the eIF2 complex that functions in the early steps of protein synthesis by forming a ternary complex with GTP and initiator tRNA. This complex binds to a 40S ribosomal subunit, followed by mRNA binding to form a 43S pre-initiation complex (43S PIC). Junction of the 60S ribosomal subunit to form the 80S initiation complex is preceded by hydrolysis of the GTP bound to eIF2 and release of an eIF2-GDP binary complex. In order for eIF2 to recycle and catalyze another round of initiation, the GDP bound to eIF2 must exchange with GTP by way of a reaction catalyzed by eIF2B. The sequence is that of Eukaryotic translation initiation factor 2 subunit 2 (eif2s2) from Dictyostelium discoideum (Social amoeba).